Here is a 61-residue protein sequence, read N- to C-terminus: Large ribosomal subunit protein uL30 (61 aa).

Belongs to the universal ribosomal protein uL30 family. As to quaternary structure, part of the 50S ribosomal subunit.

The chain is Large ribosomal subunit protein uL30 from Lactobacillus delbrueckii subsp. bulgaricus (strain ATCC 11842 / DSM 20081 / BCRC 10696 / JCM 1002 / NBRC 13953 / NCIMB 11778 / NCTC 12712 / WDCM 00102 / Lb 14).